A 1187-amino-acid chain; its full sequence is DNA-directed RNA polymerase subunit beta (1187 aa).

It belongs to the RNA polymerase beta chain family. The RNAP catalytic core consists of 2 alpha, 1 beta, 1 beta' and 1 omega subunit. When a sigma factor is associated with the core the holoenzyme is formed, which can initiate transcription.

It catalyses the reaction RNA(n) + a ribonucleoside 5'-triphosphate = RNA(n+1) + diphosphate. Functionally, DNA-dependent RNA polymerase catalyzes the transcription of DNA into RNA using the four ribonucleoside triphosphates as substrates. This Streptococcus mutans serotype c (strain ATCC 700610 / UA159) protein is DNA-directed RNA polymerase subunit beta.